Here is a 212-residue protein sequence, read N- to C-terminus: Large ribosomal subunit protein uL3 (212 aa).

N5-methylglutamine is present on Gln-153.

The protein belongs to the universal ribosomal protein uL3 family. As to quaternary structure, part of the 50S ribosomal subunit. Forms a cluster with proteins L14 and L19. Methylated by PrmB.

In terms of biological role, one of the primary rRNA binding proteins, it binds directly near the 3'-end of the 23S rRNA, where it nucleates assembly of the 50S subunit. The polypeptide is Large ribosomal subunit protein uL3 (Shewanella halifaxensis (strain HAW-EB4)).